The chain runs to 291 residues: Ribosomal RNA small subunit methyltransferase A (291 aa).

Histidine 37, leucine 39, glycine 64, glutamate 85, aspartate 110, and asparagine 131 together coordinate S-adenosyl-L-methionine.

The protein belongs to the class I-like SAM-binding methyltransferase superfamily. rRNA adenine N(6)-methyltransferase family. RsmA subfamily.

The protein localises to the cytoplasm. The enzyme catalyses adenosine(1518)/adenosine(1519) in 16S rRNA + 4 S-adenosyl-L-methionine = N(6)-dimethyladenosine(1518)/N(6)-dimethyladenosine(1519) in 16S rRNA + 4 S-adenosyl-L-homocysteine + 4 H(+). Functionally, specifically dimethylates two adjacent adenosines (A1518 and A1519) in the loop of a conserved hairpin near the 3'-end of 16S rRNA in the 30S particle. May play a critical role in biogenesis of 30S subunits. The chain is Ribosomal RNA small subunit methyltransferase A from Dehalococcoides mccartyi (strain ATCC BAA-2266 / KCTC 15142 / 195) (Dehalococcoides ethenogenes (strain 195)).